The primary structure comprises 105 residues: NADH-quinone oxidoreductase subunit K (105 aa).

A run of 3 helical transmembrane segments spans residues 9–29, 34–54, and 65–85; these read PNYY…GVLV, IVLF…LVTF, and IMAF…LAII.

It belongs to the complex I subunit 4L family. As to quaternary structure, NDH-1 is composed of 14 different subunits. Subunits NuoA, H, J, K, L, M, N constitute the membrane sector of the complex.

The protein localises to the cell membrane. The enzyme catalyses a quinone + NADH + 5 H(+)(in) = a quinol + NAD(+) + 4 H(+)(out). Its function is as follows. NDH-1 shuttles electrons from NADH, via FMN and iron-sulfur (Fe-S) centers, to quinones in the respiratory chain. The immediate electron acceptor for the enzyme in this species is believed to be a menaquinone. Couples the redox reaction to proton translocation (for every two electrons transferred, four hydrogen ions are translocated across the cytoplasmic membrane), and thus conserves the redox energy in a proton gradient. The protein is NADH-quinone oxidoreductase subunit K of Salinispora tropica (strain ATCC BAA-916 / DSM 44818 / JCM 13857 / NBRC 105044 / CNB-440).